A 217-amino-acid polypeptide reads, in one-letter code: N-(5'-phosphoribosyl)anthranilate isomerase (217 aa).

It belongs to the TrpF family.

It catalyses the reaction N-(5-phospho-beta-D-ribosyl)anthranilate = 1-(2-carboxyphenylamino)-1-deoxy-D-ribulose 5-phosphate. The protein operates within amino-acid biosynthesis; L-tryptophan biosynthesis; L-tryptophan from chorismate: step 3/5. The polypeptide is N-(5'-phosphoribosyl)anthranilate isomerase (Chlorobium phaeovibrioides (strain DSM 265 / 1930) (Prosthecochloris vibrioformis (strain DSM 265))).